We begin with the raw amino-acid sequence, 202 residues long: Imidazoleglycerol-phosphate dehydratase (202 aa).

This sequence belongs to the imidazoleglycerol-phosphate dehydratase family.

It is found in the cytoplasm. It catalyses the reaction D-erythro-1-(imidazol-4-yl)glycerol 3-phosphate = 3-(imidazol-4-yl)-2-oxopropyl phosphate + H2O. The protein operates within amino-acid biosynthesis; L-histidine biosynthesis; L-histidine from 5-phospho-alpha-D-ribose 1-diphosphate: step 6/9. The chain is Imidazoleglycerol-phosphate dehydratase from Synechococcus sp. (strain CC9605).